Consider the following 38-residue polypeptide: Photosystem II reaction center protein L (38 aa).

A helical membrane pass occupies residues 17–37 (SLFWGLLLIFVLAVLFSNYFF).

This sequence belongs to the PsbL family. In terms of assembly, PSII is composed of 1 copy each of membrane proteins PsbA, PsbB, PsbC, PsbD, PsbE, PsbF, PsbH, PsbI, PsbJ, PsbK, PsbL, PsbM, PsbT, PsbX, PsbY, PsbZ, Psb30/Ycf12, at least 3 peripheral proteins of the oxygen-evolving complex and a large number of cofactors. It forms dimeric complexes.

The protein localises to the plastid. The protein resides in the chloroplast thylakoid membrane. Its function is as follows. One of the components of the core complex of photosystem II (PSII). PSII is a light-driven water:plastoquinone oxidoreductase that uses light energy to abstract electrons from H(2)O, generating O(2) and a proton gradient subsequently used for ATP formation. It consists of a core antenna complex that captures photons, and an electron transfer chain that converts photonic excitation into a charge separation. This subunit is found at the monomer-monomer interface and is required for correct PSII assembly and/or dimerization. This is Photosystem II reaction center protein L from Chaetosphaeridium globosum (Charophycean green alga).